The primary structure comprises 256 residues: tRNA (guanine-N(7)-)-methyltransferase (256 aa).

Positions 1-25 (MVATGGQAQDQSQNQEPDVLNPTSA) are disordered. S-adenosyl-L-methionine is bound by residues Gly79, 102 to 103 (EI), 137 to 138 (NA), and Leu157. The active site involves Asp160. 235-237 (SEE) is a binding site for S-adenosyl-L-methionine.

This sequence belongs to the class I-like SAM-binding methyltransferase superfamily. TrmB family.

The protein resides in the nucleus. The catalysed reaction is guanosine(46) in tRNA + S-adenosyl-L-methionine = N(7)-methylguanosine(46) in tRNA + S-adenosyl-L-homocysteine. It functions in the pathway tRNA modification; N(7)-methylguanine-tRNA biosynthesis. Catalyzes the formation of N(7)-methylguanine at position 46 (m7G46) in tRNA. The sequence is that of tRNA (guanine-N(7)-)-methyltransferase from Drosophila simulans (Fruit fly).